A 561-amino-acid polypeptide reads, in one-letter code: Urocanate hydratase (561 aa).

NAD(+)-binding positions include 52–53 (GG), Gln130, 176–178 (GMG), Glu196, Arg201, 242–243 (NA), 263–267 (QTSAH), 273–274 (YL), and Tyr322. Residue Cys410 is part of the active site. Residue Gly492 coordinates NAD(+).

This sequence belongs to the urocanase family. NAD(+) serves as cofactor.

The protein resides in the cytoplasm. The enzyme catalyses 4-imidazolone-5-propanoate = trans-urocanate + H2O. Its pathway is amino-acid degradation; L-histidine degradation into L-glutamate; N-formimidoyl-L-glutamate from L-histidine: step 2/3. Functionally, catalyzes the conversion of urocanate to 4-imidazolone-5-propionate. The polypeptide is Urocanate hydratase (Salmonella agona (strain SL483)).